Reading from the N-terminus, the 190-residue chain is MKRFMQIWKPAVVGFLLLTLMCGVVYPGIVTIFASAAFHDKANGSIIEEKRADGTTRKVGSAEIGQTFTKPEYLIGRAASDGAATNLNPTSEEQKQLVEKRIAWWHKLDPTNNRVIPMDLVTASASGVDPDISEAAAAYQVDRISRERGISTKQVKEIIAEHTSDRLLGFWGEPTVNVLQVNLALDRLKM.

The helical transmembrane segment at 13-33 (VGFLLLTLMCGVVYPGIVTIF) threads the bilayer.

Belongs to the KdpC family. In terms of assembly, the system is composed of three essential subunits: KdpA, KdpB and KdpC.

Its subcellular location is the cell membrane. Its function is as follows. Part of the high-affinity ATP-driven potassium transport (or Kdp) system, which catalyzes the hydrolysis of ATP coupled with the electrogenic transport of potassium into the cytoplasm. This subunit acts as a catalytic chaperone that increases the ATP-binding affinity of the ATP-hydrolyzing subunit KdpB by the formation of a transient KdpB/KdpC/ATP ternary complex. The polypeptide is Potassium-transporting ATPase KdpC subunit (Listeria monocytogenes serotype 4a (strain HCC23)).